The chain runs to 155 residues: Ribosomal RNA large subunit methyltransferase H (155 aa).

S-adenosyl-L-methionine-binding positions include L73, G104, and 123–128 (ISKMTF).

The protein belongs to the RNA methyltransferase RlmH family. In terms of assembly, homodimer.

Its subcellular location is the cytoplasm. The catalysed reaction is pseudouridine(1915) in 23S rRNA + S-adenosyl-L-methionine = N(3)-methylpseudouridine(1915) in 23S rRNA + S-adenosyl-L-homocysteine + H(+). In terms of biological role, specifically methylates the pseudouridine at position 1915 (m3Psi1915) in 23S rRNA. This chain is Ribosomal RNA large subunit methyltransferase H, found in Francisella philomiragia subsp. philomiragia (strain ATCC 25017 / CCUG 19701 / FSC 153 / O#319-036).